Here is a 551-residue protein sequence, read N- to C-terminus: Hydroxylamine reductase (551 aa).

[2Fe-2S] cluster contacts are provided by Cys-3, Cys-6, Cys-18, and Cys-25. The hybrid [4Fe-2O-2S] cluster site is built by His-249, Glu-273, Cys-317, Cys-405, Cys-433, Cys-459, Glu-493, and Lys-495. Cys-405 carries the cysteine persulfide modification.

It belongs to the HCP family. The cofactor is [2Fe-2S] cluster. Requires hybrid [4Fe-2O-2S] cluster as cofactor.

The protein resides in the cytoplasm. The catalysed reaction is A + NH4(+) + H2O = hydroxylamine + AH2 + H(+). Its function is as follows. Catalyzes the reduction of hydroxylamine to form NH(3) and H(2)O. The sequence is that of Hydroxylamine reductase from Actinobacillus pleuropneumoniae serotype 5b (strain L20).